The chain runs to 302 residues: Zinc transporter ZIP1 (302 aa).

Residues Met-1–Gln-6 are Extracellular-facing. The helical transmembrane segment at Val-7–Ala-27 threads the bilayer. The Cytoplasmic segment spans residues Arg-28–Val-44. A helical membrane pass occupies residues Leu-45 to Ile-65. The Extracellular segment spans residues Pro-66–Gln-80. Residues Leu-81 to Ile-101 form a helical membrane-spanning segment. Residues Leu-102–Arg-158 are Cytoplasmic-facing. Positions Ile-123–His-145 are disordered. The helical transmembrane segment at Ser-159–Leu-179 threads the bilayer. At Gln-180 to Lys-185 the chain is on the extracellular side. The helical transmembrane segment at Val-186–Val-206 threads the bilayer. Over Lys-207–Leu-216 the chain is Cytoplasmic. The helical transmembrane segment at Trp-217–Ile-237 threads the bilayer. Over Ser-238–Gln-251 the chain is Extracellular. The helical transmembrane segment at Ala-252–Pro-272 threads the bilayer. Residues His-273–Gln-281 are Cytoplasmic-facing. The helical transmembrane segment at Leu-282–Gly-302 threads the bilayer.

The protein belongs to the ZIP transporter (TC 2.A.5) family. In terms of tissue distribution, highest levels in ovary, lower levels in intestine and gill, barely detected in kidney.

It localises to the cell membrane. It is found in the endoplasmic reticulum membrane. The catalysed reaction is Zn(2+)(in) = Zn(2+)(out). Transporter for the divalent cation Zn(2+). Mediates the influx of Zn(2+) into cells from extracellular space. In Takifugu rubripes (Japanese pufferfish), this protein is Zinc transporter ZIP1 (slc39a1).